Reading from the N-terminus, the 356-residue chain is Sporulation minus regulator 1 (356 aa).

The DNA-binding element occupies His183 to Asn199.

To N.crassa mta-2.

The protein localises to the nucleus. In terms of biological role, transcriptional activator that is required for post-fertilization events. It is required for the developmental events that occur in the female organ after fertilization. This Podospora anserina (Pleurage anserina) protein is Sporulation minus regulator 1 (SMR1).